We begin with the raw amino-acid sequence, 230 residues long: Somatolactin (230 aa).

A signal peptide spans 1 to 25 (MHTKVLQQGLWALLLWPHLFTVSVP). 3 cysteine pairs are disulfide-bonded: Cys28/Cys38, Cys88/Cys204, and Cys221/Cys229. The N-linked (GlcNAc...) asparagine glycan is linked to Asn144.

It belongs to the somatotropin/prolactin family.

It localises to the secreted. Its function is as follows. Selectively regulates proliferation and morphogenesis of neural-crest derived pigment cells. This Oryzias latipes (Japanese rice fish) protein is Somatolactin.